The primary structure comprises 356 residues: MSFSLDELAASLGATVQGDAGLIVKSIAPLDQAGADQLAFLSNPLYLNQAVTSGAGAIIVSPRDLETLTAEGHAAGRNWLVAANPYAAFARIAQRFAALGARPAAAGIHPSASVGEGAVVPASCSIGPNVTIEAGAVLGERVRIAGNSFIGADAQVGDDTLLYANVSIYHGCVVGARCILHSGVVIGADGFGFAPDFGPQGGEWVKIPQTGRAIVGDDVEIGANTAIDRGAMADTVVEQGCKIDNQVQIAHNVHVGAYTVIAGCAAISGSTKIGRYCIIGGAANFAGHLTIADRVTVSGGTSITKSIPKPGHFTSVFPFMPHADWERNAAILRGLTRMRERLQQLEQQVKHLQQSS.

Catalysis depends on histidine 251, which acts as the Proton acceptor.

The protein belongs to the transferase hexapeptide repeat family. LpxD subfamily. In terms of assembly, homotrimer.

It carries out the reaction a UDP-3-O-[(3R)-3-hydroxyacyl]-alpha-D-glucosamine + a (3R)-hydroxyacyl-[ACP] = a UDP-2-N,3-O-bis[(3R)-3-hydroxyacyl]-alpha-D-glucosamine + holo-[ACP] + H(+). It functions in the pathway bacterial outer membrane biogenesis; LPS lipid A biosynthesis. Functionally, catalyzes the N-acylation of UDP-3-O-acylglucosamine using 3-hydroxyacyl-ACP as the acyl donor. Is involved in the biosynthesis of lipid A, a phosphorylated glycolipid that anchors the lipopolysaccharide to the outer membrane of the cell. The sequence is that of UDP-3-O-acylglucosamine N-acyltransferase from Ralstonia nicotianae (strain ATCC BAA-1114 / GMI1000) (Ralstonia solanacearum).